The following is a 360-amino-acid chain: C-C chemokine receptor-like 2 (360 aa).

Residues 1–42 (MDNYTVAPDDEYDVLILDDYLDNSGPDQVPAPEFLSPQQVLQ) lie on the Extracellular side of the membrane. Residue N3 is glycosylated (N-linked (GlcNAc...) asparagine). Residues 43 to 63 (FCCAVFAVGLLDNVLAVFILV) form a helical membrane-spanning segment. At 64–73 (KYKGLKNLGN) the chain is on the cytoplasmic side. The chain crosses the membrane as a helical span at residues 74–94 (IYFLNLALSNLCFLLPLPFWA). The Extracellular portion of the chain corresponds to 95 to 109 (HTAAHGESPGNGTCK). N105 carries N-linked (GlcNAc...) asparagine glycosylation. C108 and C185 are joined by a disulfide. A helical transmembrane segment spans residues 110–130 (VLVGLHSSGLYSEVFSNILLL). Residues 131–141 (VQGYRVFSQGR) lie on the Cytoplasmic side of the membrane. A helical membrane pass occupies residues 142–162 (LASIFTTVSCGIVACILAWAM). Residues 163–202 (ATALSLPESVFYEPRMERQKHKCAFGKPHFLPIEAPLWKY) are Extracellular-facing. A helical transmembrane segment spans residues 203–223 (VLTSKMIILVLAFPLLVFIIC). At 224-243 (CRQLRRRQSFRERQYDLHKP) the chain is on the cytoplasmic side. Residues 244 to 264 (ALVITGVFLLMWAPYNTVLFL) form a helical membrane-spanning segment. Topologically, residues 265 to 285 (SAFQEHLSLQDEKSSYHLDAS) are extracellular. A helical transmembrane segment spans residues 286-307 (VQVTQLVATTHCCVNPLLYLLL). The Cytoplasmic segment spans residues 308 to 360 (DRKAFMRYLRSLFPRCNDIPYQSSGGYQQAPPREGHGRPIELYSNLHQRQDII).

This sequence belongs to the G-protein coupled receptor 1 family. In terms of tissue distribution, expressed in macrophages, astrocytes, in glial cells. Constitutively expressed by mast cells. Detected in bronchial epithelium in OVA-induced airway inflammation. Up-regulated during dendritic cell (DC) maturation.

It localises to the cell membrane. Functionally, receptor for CCL19 and chemerin/RARRES2. Does not appear to be a signaling receptor, but may have a role in modulating chemokine-triggered immune responses by capturing and internalizing CCL19 or by presenting RARRES2 ligand to CMKLR1, a functional signaling receptor. Plays a critical role for the development of Th2 responses. The protein is C-C chemokine receptor-like 2 (Ccrl2) of Mus musculus (Mouse).